Here is a 592-residue protein sequence, read N- to C-terminus: Aspartate--tRNA(Asp/Asn) ligase (592 aa).

Glutamate 177 serves as a coordination point for L-aspartate. Residues 201–204 (QLFK) form an aspartate region. Arginine 223 is a binding site for L-aspartate. Residues 223–225 (RDE) and glutamine 232 contribute to the ATP site. Position 451 (histidine 451) interacts with L-aspartate. Glutamate 485 provides a ligand contact to ATP. Arginine 492 serves as a coordination point for L-aspartate. 537 to 540 (GLDR) contributes to the ATP binding site.

The protein belongs to the class-II aminoacyl-tRNA synthetase family. Type 1 subfamily. Homodimer.

It is found in the cytoplasm. The enzyme catalyses tRNA(Asx) + L-aspartate + ATP = L-aspartyl-tRNA(Asx) + AMP + diphosphate. Aspartyl-tRNA synthetase with relaxed tRNA specificity since it is able to aspartylate not only its cognate tRNA(Asp) but also tRNA(Asn). Reaction proceeds in two steps: L-aspartate is first activated by ATP to form Asp-AMP and then transferred to the acceptor end of tRNA(Asp/Asn). The protein is Aspartate--tRNA(Asp/Asn) ligase of Bacillus subtilis (strain 168).